The primary structure comprises 292 residues: Transcription factor-like protein DPA (292 aa).

The interval 1–25 (MSMEMELFVTPEKQRQHPSVSVEKT) is disordered. The DNA-binding element occupies 51-135 (GGGLRQFSVM…KKEIRWKGLP (85 aa)). Positions 101 to 135 (NEKNIRRRVYDALNVFMALDIIARDKKEIRWKGLP) match the DEF box motif. The stretch at 163 to 184 (LKELREKVSSLESLMSRNQEMV) forms a coiled coil. Residues 246-280 (QEQNRVSSSSSTHHQSQHSSAHSSSSSCIASGTSG) are disordered. Low complexity predominate over residues 252–280 (SSSSSTHHQSQHSSAHSSSSSCIASGTSG).

It belongs to the E2F/DP family. Heterodimer with E2F. Interacts preferentially with E2FA and E2FB, but also with E2FC. In terms of tissue distribution, strongly expressed in the actively dividing tissues of the shoot apical meristem, young leaf primordia, the vascular tissues of the maturing leaf primordia and axillary buds.

It localises to the cytoplasm. It is found in the nucleus. Its function is as follows. Involved in the regulation of the G1/S transition. Increases the DNA binding and the transactivation activities of E2F proteins after heterodimerization. The complex DPA/E2FA promotes cell division and acts as a regulator of the endocycle. Positively regulates the activity of S phase-specific genes. This chain is Transcription factor-like protein DPA (DPA), found in Arabidopsis thaliana (Mouse-ear cress).